The following is a 137-amino-acid chain: Small ribosomal subunit protein bS6 (137 aa).

The tract at residues I96–E137 is disordered. A compositionally biased stretch (basic and acidic residues) spans K104–A124. Positions T125–E137 are enriched in acidic residues.

Belongs to the bacterial ribosomal protein bS6 family.

In terms of biological role, binds together with bS18 to 16S ribosomal RNA. This chain is Small ribosomal subunit protein bS6, found in Shewanella pealeana (strain ATCC 700345 / ANG-SQ1).